Here is an 87-residue protein sequence, read N- to C-terminus: Small ribosomal subunit protein bS20 (87 aa).

The tract at residues 1 to 21 is disordered; sequence MANHKSAEKRARQTIKKTERN.

Belongs to the bacterial ribosomal protein bS20 family.

Functionally, binds directly to 16S ribosomal RNA. The polypeptide is Small ribosomal subunit protein bS20 (Campylobacter jejuni subsp. jejuni serotype O:23/36 (strain 81-176)).